The chain runs to 575 residues: Phosphoenolpyruvate-protein phosphotransferase (575 aa).

The active-site Tele-phosphohistidine intermediate is the His191. Positions 298 and 334 each coordinate phosphoenolpyruvate. Glu435 and Asp459 together coordinate Mg(2+). Residues 458 to 459 (ND) and Arg469 each bind phosphoenolpyruvate. Cys506 functions as the Proton donor in the catalytic mechanism.

This sequence belongs to the PEP-utilizing enzyme family. Homodimer. Requires Mg(2+) as cofactor.

The protein resides in the cytoplasm. It catalyses the reaction L-histidyl-[protein] + phosphoenolpyruvate = N(pros)-phospho-L-histidyl-[protein] + pyruvate. General (non sugar-specific) component of the phosphoenolpyruvate-dependent sugar phosphotransferase system (sugar PTS). This major carbohydrate active-transport system catalyzes the phosphorylation of incoming sugar substrates concomitantly with their translocation across the cell membrane. Enzyme I transfers the phosphoryl group from phosphoenolpyruvate (PEP) to the phosphoryl carrier protein (HPr). This is Phosphoenolpyruvate-protein phosphotransferase (ptsI) from Enterococcus faecalis (strain ATCC 700802 / V583).